The primary structure comprises 688 residues: Glycine--tRNA ligase beta subunit (688 aa).

Belongs to the class-II aminoacyl-tRNA synthetase family. As to quaternary structure, tetramer of two alpha and two beta subunits.

It is found in the cytoplasm. It carries out the reaction tRNA(Gly) + glycine + ATP = glycyl-tRNA(Gly) + AMP + diphosphate. The polypeptide is Glycine--tRNA ligase beta subunit (Shewanella sp. (strain ANA-3)).